A 257-amino-acid polypeptide reads, in one-letter code: UPF0246 protein Shewmr4_2963 (257 aa).

This sequence belongs to the UPF0246 family.

This chain is UPF0246 protein Shewmr4_2963, found in Shewanella sp. (strain MR-4).